The following is a 741-amino-acid chain: Translation initiation factor IF-2 (741 aa).

Basic and acidic residues-rich tracts occupy residues 48–74 (HQYRPKAEKKTETKNEKKAEKKTDKPK) and 107–123 (KGKETKRTEAQQQEKKA). The segment at 48–158 (HQYRPKAEKK…PQPAKKEKEL (111 aa)) is disordered. Over residues 127–139 (AKKKGKGPAKGKK) the composition is skewed to basic residues. The segment covering 140–151 (QAAPAAKQVPQP) has biased composition (low complexity). The 170-residue stretch at 242–411 (ERPPVVTIMG…LLVSEMEELK (170 aa)) folds into the tr-type G domain. Residues 251-258 (GHVDHGKT) are G1. 251–258 (GHVDHGKT) provides a ligand contact to GTP. Residues 276-280 (GITQH) are G2. A G3 region spans residues 297 to 300 (DTPG). Residues 297–301 (DTPGH) and 351–354 (NKMD) contribute to the GTP site. Positions 351–354 (NKMD) are G4. Residues 387–389 (SAK) are G5.

Belongs to the TRAFAC class translation factor GTPase superfamily. Classic translation factor GTPase family. IF-2 subfamily.

The protein localises to the cytoplasm. Functionally, one of the essential components for the initiation of protein synthesis. Protects formylmethionyl-tRNA from spontaneous hydrolysis and promotes its binding to the 30S ribosomal subunits. Also involved in the hydrolysis of GTP during the formation of the 70S ribosomal complex. In Geobacillus stearothermophilus (Bacillus stearothermophilus), this protein is Translation initiation factor IF-2 (infB).